A 426-amino-acid polypeptide reads, in one-letter code: Proline--tRNA ligase (426 aa).

The protein belongs to the class-II aminoacyl-tRNA synthetase family. ProS type 2 subfamily. In terms of assembly, homodimer.

It is found in the cytoplasm. The enzyme catalyses tRNA(Pro) + L-proline + ATP = L-prolyl-tRNA(Pro) + AMP + diphosphate. Functionally, catalyzes the attachment of proline to tRNA(Pro) in a two-step reaction: proline is first activated by ATP to form Pro-AMP and then transferred to the acceptor end of tRNA(Pro). The chain is Proline--tRNA ligase from Ehrlichia ruminantium (strain Gardel).